The sequence spans 204 residues: Lymphotoxin-alpha (204 aa).

The first 33 residues, 1-33, serve as a signal peptide directing secretion; that stretch reads MTPPGRLYLLRVRSAPVLLLLGLLLGLPPGAQG. A THD domain is found at 62–204; that stretch reads PAAHLIGDPS…SSVFFGAFAL (143 aa). N95 carries N-linked (GlcNAc...) asparagine glycosylation. C119 and C155 form a disulfide bridge.

It belongs to the tumor necrosis factor family. In terms of assembly, homotrimer, and heterotrimer of either two LTB and one LTA subunits or (less prevalent) two LTA and one LTB subunits. Interacts with TNFRSF14.

Its subcellular location is the secreted. The protein resides in the membrane. In terms of biological role, cytokine that in its homotrimeric form binds to TNFRSF1A/TNFR1, TNFRSF1B/TNFBR and TNFRSF14/HVEM. In its heterotrimeric form with LTB binds to TNFRSF3/LTBR. Lymphotoxin is produced by lymphocytes and is cytotoxic for a wide range of tumor cells in vitro and in vivo. The protein is Lymphotoxin-alpha (LTA) of Canis lupus familiaris (Dog).